We begin with the raw amino-acid sequence, 235 residues long: Small heat shock protein, chloroplastic (235 aa).

Disordered regions lie at residues 1–23 (MAYT…TSKI) and 51–80 (TGDN…ERRP). The segment covering 52–63 (GDNKDTSVDVHH) has biased composition (basic and acidic residues). The span at 64 to 74 (SSAQGGNNQGT) shows a compositional bias: polar residues. One can recognise a sHSP domain in the interval 126–235 (SGTGEIRTPW…EKKVIDVQIN (110 aa)).

Belongs to the small heat shock protein (HSP20) family. As to expression, in fruits, flowers, leaves, and stems.

It localises to the plastid. Its subcellular location is the chloroplast. In Solanum lycopersicum (Tomato), this protein is Small heat shock protein, chloroplastic (HSP21).